The sequence spans 48 residues: Small, acid-soluble spore protein P (48 aa).

The segment covering 1-12 has biased composition (basic and acidic residues); that stretch reads MTNKNDGKDMRK. The interval 1–48 is disordered; that stretch reads MTNKNDGKDMRKNAPKGDNPGQPEPLDGSKKVKNRNHTRQKHNTSHDM. A compositionally biased stretch (basic residues) spans 31–48; that stretch reads KVKNRNHTRQKHNTSHDM.

This sequence belongs to the SspP family.

The protein localises to the spore core. This is Small, acid-soluble spore protein P from Geobacillus kaustophilus (strain HTA426).